Here is a 295-residue protein sequence, read N- to C-terminus: Ethanolamine ammonia-lyase small subunit (295 aa).

Residues Val-207, Glu-228, and Cys-258 each contribute to the adenosylcob(III)alamin site.

It belongs to the EutC family. As to quaternary structure, the basic unit is a heterodimer which dimerizes to form tetramers. The heterotetramers trimerize; 6 large subunits form a core ring with 6 small subunits projecting outwards. Adenosylcob(III)alamin is required as a cofactor.

It is found in the bacterial microcompartment. The catalysed reaction is ethanolamine = acetaldehyde + NH4(+). The protein operates within amine and polyamine degradation; ethanolamine degradation. Catalyzes the deamination of various vicinal amino-alcohols to oxo compounds. Allows this organism to utilize ethanolamine as the sole source of nitrogen and carbon in the presence of external vitamin B12. The protein is Ethanolamine ammonia-lyase small subunit of Shigella sonnei (strain Ss046).